The following is a 456-amino-acid chain: Smoothelin-like protein 2 (456 aa).

The stretch at 24 to 88 (LEGAVRALHE…RQVEALGLAT (65 aa)) forms a coiled coil. Residue Thr-96 is modified to Phosphothreonine. Ser-98, Ser-126, and Ser-131 each carry phosphoserine. The span at 120–129 (HATFSLSGRS) shows a compositional bias: polar residues. 3 disordered regions span residues 120–140 (HATF…ASDL), 154–190 (GHQL…RMPH), and 220–310 (VGGF…GAQA). Residues 131-140 (SVEHDEASDL) are compositionally biased toward basic and acidic residues. The segment covering 163 to 174 (NGSSEVQTSSAQ) has biased composition (polar residues). Positions 242–251 (SSSFTRSLSG) are enriched in low complexity. Ser-250, Ser-252, and Ser-265 each carry phosphoserine. The segment covering 268 to 279 (LVTPPQSPPSSQ) has biased composition (pro residues). A Phosphothreonine modification is found at Thr-270. Ser-274 is modified (phosphoserine). Polar residues predominate over residues 298–308 (RSQTLPRTSGA). A Phosphoserine modification is found at Ser-339. Residues 346–453 (SSIKQILLEW…YVQSLYNHLR (108 aa)) enclose the Calponin-homology (CH) domain.

It belongs to the smoothelin family.

The sequence is that of Smoothelin-like protein 2 (Smtnl2) from Mus musculus (Mouse).